A 303-amino-acid chain; its full sequence is Protein transport protein SEC13-2 (303 aa).

6 WD repeats span residues 7 to 46 (AHEGVIHHAALNYYGTRLATCSSDKTVKIFEINDVNNSSS), 53 to 95 (GHEG…GKMQ), 102 to 143 (VHSA…IAST), 149 to 202 (AHKF…ETYV), 209 to 251 (GHKD…KKND), and 261 to 300 (KFEQKLGSVSWSLSGNLLAVSDDDKNVTIWKESGDGKWEE).

Belongs to the WD repeat SEC13 family. In terms of assembly, the COPII coat is composed of at least 5 proteins: the SEC23/24 complex, the SEC13/31 complex, and the protein SAR1. Component of the nuclear pore complex (NPC). NPC constitutes the exclusive means of nucleocytoplasmic transport. NPCs allow the passive diffusion of ions and small molecules and the active, nuclear transport receptor-mediated bidirectional transport of macromolecules such as proteins, RNAs, ribonucleoparticles (RNPs), and ribosomal subunits across the nuclear envelope. Due to its 8-fold rotational symmetry, all subunits are present with 8 copies or multiples thereof.

Its subcellular location is the cytoplasmic vesicle. The protein localises to the COPII-coated vesicle membrane. It localises to the endoplasmic reticulum membrane. It is found in the nucleus. The protein resides in the nuclear pore complex. Component of the coat protein complex II (COPII) which promotes the formation of transport vesicles from the endoplasmic reticulum (ER). The coat has two main functions, the physical deformation of the endoplasmic reticulum membrane into vesicles and the selection of cargo molecules. It also functions as a component of the nuclear pore complex (NPC). NPC components, collectively referred to as nucleoporins (NUPs), can play the role of both NPC structural components and of docking or interaction partners for transiently associated nuclear transport factors. SEC13 is required for efficient mRNA export from the nucleus to the cytoplasm and for correct nuclear pore biogenesis and distribution. The protein is Protein transport protein SEC13-2 (SEC132) of Candida glabrata (strain ATCC 2001 / BCRC 20586 / JCM 3761 / NBRC 0622 / NRRL Y-65 / CBS 138) (Yeast).